We begin with the raw amino-acid sequence, 621 residues long: Chaperone protein HscA homolog (621 aa).

This sequence belongs to the heat shock protein 70 family.

Its function is as follows. Chaperone involved in the maturation of iron-sulfur cluster-containing proteins. Has a low intrinsic ATPase activity which is markedly stimulated by HscB. The protein is Chaperone protein HscA homolog of Cupriavidus necator (strain ATCC 17699 / DSM 428 / KCTC 22496 / NCIMB 10442 / H16 / Stanier 337) (Ralstonia eutropha).